The sequence spans 398 residues: Phosphoglycerate kinase (398 aa).

Substrate-binding positions include 21–23 (DFN), R36, 59–62 (HLGR), R119, and R157. ATP is bound by residues K208, G296, E327, and 354–357 (GGDS).

Belongs to the phosphoglycerate kinase family. Monomer.

The protein localises to the cytoplasm. It carries out the reaction (2R)-3-phosphoglycerate + ATP = (2R)-3-phospho-glyceroyl phosphate + ADP. It functions in the pathway carbohydrate degradation; glycolysis; pyruvate from D-glyceraldehyde 3-phosphate: step 2/5. This is Phosphoglycerate kinase (pgk) from Streptococcus pyogenes serotype M1.